A 456-amino-acid polypeptide reads, in one-letter code: Bifunctional protein GlmU (456 aa).

Positions 1–229 (MLNNAMSVVI…LSEVEGVNNR (229 aa)) are pyrophosphorylase. UDP-N-acetyl-alpha-D-glucosamine-binding positions include 11–14 (LAAG), K25, Q76, 81–82 (GT), 103–105 (YGD), G140, E154, N169, and N227. Position 105 (D105) interacts with Mg(2+). N227 contributes to the Mg(2+) binding site. The tract at residues 230–250 (LQLSRLERVYQSEQAEKLLLA) is linker. Residues 251 to 456 (GVMLRDPARF…EGWRRPVKKK (206 aa)) form an N-acetyltransferase region. Residues R333 and K351 each coordinate UDP-N-acetyl-alpha-D-glucosamine. Catalysis depends on H363, which acts as the Proton acceptor. UDP-N-acetyl-alpha-D-glucosamine contacts are provided by Y366 and N377. Residues A380, 386–387 (NY), S405, A423, and R440 contribute to the acetyl-CoA site.

The protein in the N-terminal section; belongs to the N-acetylglucosamine-1-phosphate uridyltransferase family. In the C-terminal section; belongs to the transferase hexapeptide repeat family. In terms of assembly, homotrimer. Mg(2+) is required as a cofactor.

Its subcellular location is the cytoplasm. It catalyses the reaction alpha-D-glucosamine 1-phosphate + acetyl-CoA = N-acetyl-alpha-D-glucosamine 1-phosphate + CoA + H(+). The catalysed reaction is N-acetyl-alpha-D-glucosamine 1-phosphate + UTP + H(+) = UDP-N-acetyl-alpha-D-glucosamine + diphosphate. It functions in the pathway nucleotide-sugar biosynthesis; UDP-N-acetyl-alpha-D-glucosamine biosynthesis; N-acetyl-alpha-D-glucosamine 1-phosphate from alpha-D-glucosamine 6-phosphate (route II): step 2/2. Its pathway is nucleotide-sugar biosynthesis; UDP-N-acetyl-alpha-D-glucosamine biosynthesis; UDP-N-acetyl-alpha-D-glucosamine from N-acetyl-alpha-D-glucosamine 1-phosphate: step 1/1. It participates in bacterial outer membrane biogenesis; LPS lipid A biosynthesis. Catalyzes the last two sequential reactions in the de novo biosynthetic pathway for UDP-N-acetylglucosamine (UDP-GlcNAc). The C-terminal domain catalyzes the transfer of acetyl group from acetyl coenzyme A to glucosamine-1-phosphate (GlcN-1-P) to produce N-acetylglucosamine-1-phosphate (GlcNAc-1-P), which is converted into UDP-GlcNAc by the transfer of uridine 5-monophosphate (from uridine 5-triphosphate), a reaction catalyzed by the N-terminal domain. In Escherichia coli O81 (strain ED1a), this protein is Bifunctional protein GlmU.